Here is a 523-residue protein sequence, read N- to C-terminus: Transcription factor MYB120 (523 aa).

HTH myb-type domains follow at residues 23-75 (GVIL…ANHL) and 76-130 (RPNL…KRLL). 2 DNA-binding regions (H-T-H motif) span residues 51–75 (WNAV…ANHL) and 103–126 (WARM…NTRL). Disordered regions lie at residues 140-254 (DIIP…YPTL), 332-373 (QTAT…SHYT), 396-426 (QIPQ…GAHR), and 444-470 (LASG…NNTN). Over residues 147–167 (LHPHPHHQQQQQHNHHHHHHQ) the composition is skewed to basic residues. Positions 175–185 (MYFQPQSSQRN) are enriched in polar residues. Low complexity-rich tracts occupy residues 202-212 (SSSSFTFHTTT), 223-232 (TPNTPSQLSS), and 341-368 (NPYS…PSFL). Polar residues predominate over residues 396–410 (QIPQIDGFNNVNNFT).

In terms of tissue distribution, expressed in pollen grains and pollen tube. Mostly expressed in mature pollen grains, and, to a lower extent, in inflorescences and siliques.

Its subcellular location is the nucleus. In terms of biological role, transcription activator. Binds to 5'-CAACTGTC-3' and/or 5'-TAACAAA-3' motif in target gene promoter to promote their expression. Together with MYB97 and MYB101, functions as a male factor that controls pollen tube-synergid interaction in fertilization. Required for pollen tube growth arrest and sperm cell release in the female gametophyte, probably via the regulation of pollen tube-specific gene expression. The protein is Transcription factor MYB120 of Arabidopsis thaliana (Mouse-ear cress).